A 90-amino-acid polypeptide reads, in one-letter code: MAFVRSLLGAKKILSRSTGAGSAAPKGFLAVYVGESQKKRYLVPVSYLNQPSFQALLSKSEEEFGFDHPMGGLTIPCPEDTFINVTSRLQ.

This sequence belongs to the ARG7 family.

The protein localises to the cell membrane. In terms of biological role, functions as a positive effector of cell expansion through modulation of auxin transport. The polypeptide is Auxin-responsive protein SAUR24 (Arabidopsis thaliana (Mouse-ear cress)).